Consider the following 317-residue polypeptide: Porphobilinogen deaminase (317 aa).

Cysteine 240 is modified (S-(dipyrrolylmethanemethyl)cysteine).

This sequence belongs to the HMBS family. In terms of assembly, monomer. Dipyrromethane is required as a cofactor.

It carries out the reaction 4 porphobilinogen + H2O = hydroxymethylbilane + 4 NH4(+). The protein operates within porphyrin-containing compound metabolism; protoporphyrin-IX biosynthesis; coproporphyrinogen-III from 5-aminolevulinate: step 2/4. In terms of biological role, tetrapolymerization of the monopyrrole PBG into the hydroxymethylbilane pre-uroporphyrinogen in several discrete steps. The sequence is that of Porphobilinogen deaminase from Nitratidesulfovibrio vulgaris (strain DSM 19637 / Miyazaki F) (Desulfovibrio vulgaris).